Consider the following 70-residue polypeptide: uncharacterized protein (70 aa).

The chain crosses the membrane as a helical span at residues 14-34 (CLVVWFACVYSLLILVVLLLI).

Its subcellular location is the virion membrane. This is an uncharacterized protein from Homo sapiens (Human).